Consider the following 273-residue polypeptide: Dermonecrotic toxin LapSicTox-alphaIB1b3 (273 aa).

H5 is a catalytic residue. Mg(2+) is bound by residues E25 and D27. Residue H41 is the Nucleophile of the active site. 2 disulfides stabilise this stretch: C45/C51 and C47/C190. D85 contacts Mg(2+). The N-linked (GlcNAc...) asparagine glycan is linked to N250.

Belongs to the arthropod phospholipase D family. Class II subfamily. Mg(2+) serves as cofactor. Expressed by the venom gland.

It localises to the secreted. The catalysed reaction is an N-(acyl)-sphingosylphosphocholine = an N-(acyl)-sphingosyl-1,3-cyclic phosphate + choline. The enzyme catalyses an N-(acyl)-sphingosylphosphoethanolamine = an N-(acyl)-sphingosyl-1,3-cyclic phosphate + ethanolamine. It catalyses the reaction a 1-acyl-sn-glycero-3-phosphocholine = a 1-acyl-sn-glycero-2,3-cyclic phosphate + choline. It carries out the reaction a 1-acyl-sn-glycero-3-phosphoethanolamine = a 1-acyl-sn-glycero-2,3-cyclic phosphate + ethanolamine. Its function is as follows. Dermonecrotic toxins cleave the phosphodiester linkage between the phosphate and headgroup of certain phospholipids (sphingolipid and lysolipid substrates), forming an alcohol (often choline) and a cyclic phosphate. This toxin acts on sphingomyelin (SM). It may also act on ceramide phosphoethanolamine (CPE), lysophosphatidylcholine (LPC) and lysophosphatidylethanolamine (LPE), but not on lysophosphatidylserine (LPS), and lysophosphatidylglycerol (LPG). It acts by transphosphatidylation, releasing exclusively cyclic phosphate products as second products. Induces dermonecrosis, hemolysis, increased vascular permeability, edema, inflammatory response, and platelet aggregation. This is Dermonecrotic toxin LapSicTox-alphaIB1b3 from Loxosceles apachea (Apache recluse spider).